The chain runs to 344 residues: Beta-1,4-galactosyltransferase 4 (344 aa).

Residues 1 to 12 are Cytoplasmic-facing; sequence MGCNPPYLLPYR. The helical; Signal-anchor for type II membrane protein transmembrane segment at 13-38 threads the bilayer; that stretch reads LRLLLFFTLCLTVVGWVTSNYFVDPI. Topologically, residues 39-344 are lumenal; it reads QVIPKAKVFM…NITVDFWTGV (306 aa). An intrachain disulfide couples cysteine 77 to cysteine 118. UDP-alpha-D-galactose contacts are provided by residues 129-133, 168-170, and 195-196; these read PHRNR, FNR, and VD. A disulfide bond links cysteine 189 and cysteine 208. Aspartate 196 lines the Mn(2+) pocket. N-linked (GlcNAc...) asparagine glycosylation occurs at asparagine 220. UDP-alpha-D-galactose-binding residues include tyrosine 224 and tryptophan 256. 258 to 261 is a binding site for N-acetyl-D-glucosamine; it reads GEDD. A Mn(2+)-binding site is contributed by histidine 289. 289-291 provides a ligand contact to UDP-alpha-D-galactose; that stretch reads HTR. N-acetyl-D-glucosamine is bound at residue arginine 301. N-linked (GlcNAc...) asparagine glycosylation is present at asparagine 335.

This sequence belongs to the glycosyltransferase 7 family. Mn(2+) serves as cofactor.

The protein localises to the golgi apparatus. It localises to the golgi stack membrane. The catalysed reaction is N-acetyl-D-glucosamine + UDP-alpha-D-galactose = beta-D-galactosyl-(1-&gt;4)-N-acetyl-D-glucosamine + UDP + H(+). It carries out the reaction a beta-D-GlcNAc-(1-&gt;3)-beta-D-Gal-(1-&gt;4)-beta-D-Glc-(1&lt;-&gt;1)-Cer(d18:1(4E)) + UDP-alpha-D-galactose = a neolactoside nLc4Cer(d18:1(4E)) + UDP + H(+). Its pathway is protein modification; protein glycosylation. Galactose (Gal) transferase involved in the biosynthesis of glycoproteins, proteoglycans, and glycosyphingolipids. Catalyzes the transfer of Gal residue via a beta1-&gt;4 linkage from UDP-Gal to the non-reducing terminal N-acetyl glucosamine 6-O-sulfate (6-O-sulfoGlcNAc) in the linearly growing chain of both N- and O-linked keratan sulfate proteoglycans. Cooperates with B3GNT7 N-acetyl glucosamine transferase and CHST6 and CHST1 sulfotransferases to construct and elongate mono- and disulfated disaccharide units [-&gt;3Galbeta1-&gt;4(6-sulfoGlcNAcbeta)1-&gt;] and [-&gt;3(6-sulfoGalbeta)1-&gt;4(6-sulfoGlcNAcbeta)1-&gt;] within keratan sulfate polymer. The protein is Beta-1,4-galactosyltransferase 4 (B4GALT4) of Cricetulus griseus (Chinese hamster).